The following is a 292-amino-acid chain: ATP synthase gamma chain (292 aa).

This sequence belongs to the ATPase gamma chain family. In terms of assembly, F-type ATPases have 2 components, CF(1) - the catalytic core - and CF(0) - the membrane proton channel. CF(1) has five subunits: alpha(3), beta(3), gamma(1), delta(1), epsilon(1). CF(0) has three main subunits: a, b and c.

Its subcellular location is the cell inner membrane. Produces ATP from ADP in the presence of a proton gradient across the membrane. The gamma chain is believed to be important in regulating ATPase activity and the flow of protons through the CF(0) complex. This Maridesulfovibrio salexigens (strain ATCC 14822 / DSM 2638 / NCIMB 8403 / VKM B-1763) (Desulfovibrio salexigens) protein is ATP synthase gamma chain.